The chain runs to 599 residues: MKLLKLTGFIFFLFFLTESLTLPTQPRDIENFNSTQKFIEDNIEYITIIAFAQYVQEATFEEMEKLVKDMVEYKDRCMADKTLPECSKLPNNVLQEKICAMEGLPQKHNFSHCCSKVDAQRRLCFFYNKKSDVGFLPPFPTLDPEEKCQAYESNRESLLNHFLYEVARRNPFVFAPTLLTVAVHFEEVAKSCCEEQNKVNCLQTRAIPVTQYLKAFSSYQKHVCGALLKFGTKVVHFIYIAILSQKFPKIEFKELISLVEDVSSNYDGCCEGDVVQCIRDTSKVMNHICSKQDSISSKIKECCEKKIPERGQCIINSNKDDRPKDLSLREGKFTDSENVCQERDADPDTFFAKFTFEYSRRHPDLSIPELLRIVQIYKDLLRNCCNTENPPGCYRYAEDKFNETTEKSLKMVQQECKHFQNLGKDGLKYHYLIRLTKIAPQLSTEELVSLGEKMVTAFTTCCTLSEEFACVDNLADLVFGELCGVNENRTINPAVDHCCKTNFAFRRPCFESLKADKTYVPPPFSQDLFTFHADMCQSQNEELQRKTDRFLVNLVKLKHELTDEELQSLFTNFANVVDKCCKAESPEVCFNEESPKIGN.

An N-terminal signal peptide occupies residues Met1 to Thr21. Albumin domains follow at residues Leu22–Thr210, Gln211–Glu403, and Thr404–Asn599. Asn33 is a glycosylation site (N-linked (GlcNAc...) (complex) asparagine). Intrachain disulfides connect Cys77-Cys86, Cys99-Cys114, Cys113-Cys124, Cys148-Cys193, Cys192-Cys201, Cys224-Cys270, Cys269-Cys277, Cys289-Cys303, Cys302-Cys313, Cys340-Cys385, and Cys384-Cys393. Asn109 carries an N-linked (GlcNAc...) (complex) asparagine glycan. Positions Ala215 to Lys319 are binding pocket for hydrophobic ligands. N-linked (GlcNAc...) (complex) asparagine; atypical glycosylation is present at Asn383. Residue Asn402 is glycosylated (N-linked (GlcNAc...) (complex) asparagine). 6 cysteine pairs are disulfide-bonded: Cys416–Cys462, Cys461–Cys470, Cys483–Cys499, Cys498–Cys509, Cys536–Cys581, and Cys580–Cys589. Asn488 is a glycosylation site (N-linked (GlcNAc...) asparagine).

The protein belongs to the ALB/AFP/VDB family. In terms of assembly, forms a 1:1 complex with Wnt family members; interacts with WNT1, WNT2B, WNT3, WNT3A, WNT5A, WNT7A, WNT7B, WNT8, WNT9A, WNT9B, WNT10A and WNT10B. N-glycosylated; more than 90% of the glycans are sialylated. As to expression, high level detected in plasma but also in extravascular fluids such as follicular and cerebrospinal fluids (at protein level).

The protein localises to the secreted. Functions as a carrier for hydrophobic molecules in body fluids. Essential for the solubility and activity of lipidated Wnt family members, including WNT1, WNT2B, WNT3, WNT3A, WNT5A, WNT7A, WNT7B, WNT8, WNT9A, WNT9B, WNT10A and WNT10B. Binds vitamin E. May transport vitamin E in body fluids under conditions where the lipoprotein system is not sufficient. May be involved in the transport of vitamin E across the blood-brain barrier. The sequence is that of Afamin (AFM) from Homo sapiens (Human).